The primary structure comprises 176 residues: ATP synthase subunit b (176 aa).

A helical membrane pass occupies residues 18 to 38 (FGLDATVWVSIAMLVFLGILV).

The protein belongs to the ATPase B chain family. In terms of assembly, F-type ATPases have 2 components, F(1) - the catalytic core - and F(0) - the membrane proton channel. F(1) has five subunits: alpha(3), beta(3), gamma(1), delta(1), epsilon(1). F(0) has three main subunits: a(1), b(2) and c(10-14). The alpha and beta chains form an alternating ring which encloses part of the gamma chain. F(1) is attached to F(0) by a central stalk formed by the gamma and epsilon chains, while a peripheral stalk is formed by the delta and b chains.

It is found in the cell inner membrane. Its function is as follows. F(1)F(0) ATP synthase produces ATP from ADP in the presence of a proton or sodium gradient. F-type ATPases consist of two structural domains, F(1) containing the extramembraneous catalytic core and F(0) containing the membrane proton channel, linked together by a central stalk and a peripheral stalk. During catalysis, ATP synthesis in the catalytic domain of F(1) is coupled via a rotary mechanism of the central stalk subunits to proton translocation. Functionally, component of the F(0) channel, it forms part of the peripheral stalk, linking F(1) to F(0). This is ATP synthase subunit b from Sphingopyxis alaskensis (strain DSM 13593 / LMG 18877 / RB2256) (Sphingomonas alaskensis).